Here is an 875-residue protein sequence, read N- to C-terminus: Probable ATP-dependent RNA helicase DDX10 (875 aa).

Residues 1–44 (MGKTVASLGQGTRPDPVRSFNRWKKKHSHRQHQKKERRKQLKKP) form a disordered region. Residue Thr4 is modified to Phosphothreonine. Ser7 is subject to Phosphoserine. The segment covering 21 to 41 (NRWKKKHSHRQHQKKERRKQL) has biased composition (basic residues). The Q motif motif lies at 69–97 (TRFSDFPLSKKTLKGLQEAQYRLVTEIQK). ATP-binding positions include 89–91 (YRL), Gln96, and 113–120 (AKTGSGKT). One can recognise a Helicase ATP-binding domain in the interval 100-274 (IGLALQGKDV…RLSLKDPEYV (175 aa)). Residues 222 to 225 (DEAD) carry the DEAD box motif. Positions 300 to 449 (KISVLFSFLR…EIKINPEKLI (150 aa)) constitute a Helicase C-terminal domain. Residues 525–612 (LVKNPVTEAV…HTESVVSIEE (88 aa)) form a disordered region. Ser540 is subject to Phosphoserine. Residue Lys556 is modified to N6-acetyllysine. The segment covering 562 to 575 (KSGERLEETEHRLA) has biased composition (basic and acidic residues). Positions 578–593 (DGDEEQDEETEDEETE) are enriched in acidic residues. Thr587 bears the Phosphothreonine mark. Residues 594–604 (DHLGKAREPHT) show a composition bias toward basic and acidic residues. Lys652 participates in a covalent cross-link: Glycyl lysine isopeptide (Lys-Gly) (interchain with G-Cter in SUMO2). Over residues 734 to 744 (EEDKFDKEEYR) the composition is skewed to basic and acidic residues. The tract at residues 734-860 (EEDKFDKEEY…VEPLDTGLSL (127 aa)) is disordered. Positions 745–754 (KKIKAKHRER) are enriched in basic residues. Over residues 755–774 (RLKEREARREANKRQAKARD) the composition is skewed to basic and acidic residues. Positions 775–789 (EEEAFLDWSDEDDGG) are enriched in acidic residues. Ser783 carries the phosphoserine modification. Positions 797–831 (DPDKHRSSEESESEDTNHKMSDTKKKQETRKRNNT) are enriched in basic and acidic residues.

Belongs to the DEAD box helicase family. DDX10/DBP4 subfamily. In terms of assembly, interacts with AIM2; this interaction promotes AIM2 stability. Interacts with SCNA; this interaction causes DDX10 mislocalization to the nucleoplasm and cytoplasmic inclusions.

It is found in the cytoplasm. Its subcellular location is the nucleus. The protein resides in the nucleolus. It carries out the reaction ATP + H2O = ADP + phosphate + H(+). Putative ATP-dependent RNA helicase that plays various role in innate immunity or inflammation. Plays a role in the enhancement of AIM2-induced inflammasome activation by interacting with AIM2 and stabilizing its protein level. Negatively regulates viral infection by promoting interferon beta production and interferon stimulated genes/ISGs expression. This Mus musculus (Mouse) protein is Probable ATP-dependent RNA helicase DDX10 (Ddx10).